The sequence spans 365 residues: Chorismate synthase (365 aa).

Arg46 serves as a coordination point for NADP(+). FMN contacts are provided by residues 124 to 126 (RAS), Gly284, 299 to 303 (KPTPS), and Arg326.

It belongs to the chorismate synthase family. The cofactor is FMNH2.

It catalyses the reaction 5-O-(1-carboxyvinyl)-3-phosphoshikimate = chorismate + phosphate. Its pathway is metabolic intermediate biosynthesis; chorismate biosynthesis; chorismate from D-erythrose 4-phosphate and phosphoenolpyruvate: step 7/7. Its function is as follows. Catalyzes the anti-1,4-elimination of the C-3 phosphate and the C-6 proR hydrogen from 5-enolpyruvylshikimate-3-phosphate (EPSP) to yield chorismate, which is the branch point compound that serves as the starting substrate for the three terminal pathways of aromatic amino acid biosynthesis. This reaction introduces a second double bond into the aromatic ring system. In Pyrobaculum neutrophilum (strain DSM 2338 / JCM 9278 / NBRC 100436 / V24Sta) (Thermoproteus neutrophilus), this protein is Chorismate synthase.